Here is a 534-residue protein sequence, read N- to C-terminus: CTP synthase (534 aa).

The segment at 1–265 (MKYIVVTGGV…TTRLMKHLKL (265 aa)) is amidoligase domain. Residue S12 coordinates CTP. S12 serves as a coordination point for UTP. 13–18 (GLGKGI) contributes to the ATP binding site. Y53 provides a ligand contact to L-glutamine. D70 contacts ATP. Mg(2+) is bound by residues D70 and E140. Residues 147 to 149 (DIE), 186 to 191 (KTKPSQ), and K222 each bind CTP. Residues 186–191 (KTKPSQ) and K222 contribute to the UTP site. One can recognise a Glutamine amidotransferase type-1 domain in the interval 289-530 (KLAIVGKYTN…VRAMCKYNKE (242 aa)). Residue G352 participates in L-glutamine binding. C379 serves as the catalytic Nucleophile; for glutamine hydrolysis. L-glutamine-binding positions include 380–383 (LGMQ), E403, and R460. Residues H503 and E505 contribute to the active site.

The protein belongs to the CTP synthase family. As to quaternary structure, homotetramer.

It catalyses the reaction UTP + L-glutamine + ATP + H2O = CTP + L-glutamate + ADP + phosphate + 2 H(+). It carries out the reaction L-glutamine + H2O = L-glutamate + NH4(+). The catalysed reaction is UTP + NH4(+) + ATP = CTP + ADP + phosphate + 2 H(+). The protein operates within pyrimidine metabolism; CTP biosynthesis via de novo pathway; CTP from UDP: step 2/2. Its activity is regulated as follows. Allosterically activated by GTP, when glutamine is the substrate; GTP has no effect on the reaction when ammonia is the substrate. The allosteric effector GTP functions by stabilizing the protein conformation that binds the tetrahedral intermediate(s) formed during glutamine hydrolysis. Inhibited by the product CTP, via allosteric rather than competitive inhibition. Functionally, catalyzes the ATP-dependent amination of UTP to CTP with either L-glutamine or ammonia as the source of nitrogen. Regulates intracellular CTP levels through interactions with the four ribonucleotide triphosphates. The chain is CTP synthase from Methanosarcina acetivorans (strain ATCC 35395 / DSM 2834 / JCM 12185 / C2A).